The following is a 52-amino-acid chain: Large ribosomal subunit protein bL33 (52 aa).

Belongs to the bacterial ribosomal protein bL33 family.

This chain is Large ribosomal subunit protein bL33, found in Campylobacter jejuni subsp. doylei (strain ATCC BAA-1458 / RM4099 / 269.97).